We begin with the raw amino-acid sequence, 354 residues long: Probable L-ascorbate-6-phosphate lactonase UlaG (354 aa).

It belongs to the UlaG family. It depends on a divalent metal cation as a cofactor.

It localises to the cytoplasm. It carries out the reaction L-ascorbate 6-phosphate + H2O = 3-dehydro-L-gulonate 6-phosphate. It participates in cofactor degradation; L-ascorbate degradation; D-xylulose 5-phosphate from L-ascorbate: step 1/4. Probably catalyzes the hydrolysis of L-ascorbate-6-P into 3-keto-L-gulonate-6-P. Is essential for L-ascorbate utilization under anaerobic conditions. In Salmonella gallinarum (strain 287/91 / NCTC 13346), this protein is Probable L-ascorbate-6-phosphate lactonase UlaG.